A 330-amino-acid polypeptide reads, in one-letter code: Ketol-acid reductoisomerase (NADP(+)) (330 aa).

The 181-residue stretch at 1-181 (MKVFYDSDFK…GLSRAGVIQT (181 aa)) folds into the KARI N-terminal Rossmann domain. Residues 24-27 (YGSQ), R47, S52, and 82-85 (DELQ) each bind NADP(+). Residue H107 is part of the active site. NADP(+) is bound at residue G133. One can recognise a KARI C-terminal knotted domain in the interval 182–327 (TFKEETETDL…AKLRKMCGLE (146 aa)). 4 residues coordinate Mg(2+): D190, E194, E226, and E230. Substrate is bound at residue S251.

The protein belongs to the ketol-acid reductoisomerase family. The cofactor is Mg(2+).

The enzyme catalyses (2R)-2,3-dihydroxy-3-methylbutanoate + NADP(+) = (2S)-2-acetolactate + NADPH + H(+). It catalyses the reaction (2R,3R)-2,3-dihydroxy-3-methylpentanoate + NADP(+) = (S)-2-ethyl-2-hydroxy-3-oxobutanoate + NADPH + H(+). It participates in amino-acid biosynthesis; L-isoleucine biosynthesis; L-isoleucine from 2-oxobutanoate: step 2/4. The protein operates within amino-acid biosynthesis; L-valine biosynthesis; L-valine from pyruvate: step 2/4. Its function is as follows. Involved in the biosynthesis of branched-chain amino acids (BCAA). Catalyzes an alkyl-migration followed by a ketol-acid reduction of (S)-2-acetolactate (S2AL) to yield (R)-2,3-dihydroxy-isovalerate. In the isomerase reaction, S2AL is rearranged via a Mg-dependent methyl migration to produce 3-hydroxy-3-methyl-2-ketobutyrate (HMKB). In the reductase reaction, this 2-ketoacid undergoes a metal-dependent reduction by NADPH to yield (R)-2,3-dihydroxy-isovalerate. The sequence is that of Ketol-acid reductoisomerase (NADP(+)) from Methanococcus maripaludis (strain C7 / ATCC BAA-1331).